The following is a 268-amino-acid chain: Tryptophan synthase alpha chain (268 aa).

Active-site proton acceptor residues include Glu-49 and Asp-60.

The protein belongs to the TrpA family. Tetramer of two alpha and two beta chains.

It carries out the reaction (1S,2R)-1-C-(indol-3-yl)glycerol 3-phosphate + L-serine = D-glyceraldehyde 3-phosphate + L-tryptophan + H2O. It participates in amino-acid biosynthesis; L-tryptophan biosynthesis; L-tryptophan from chorismate: step 5/5. Its function is as follows. The alpha subunit is responsible for the aldol cleavage of indoleglycerol phosphate to indole and glyceraldehyde 3-phosphate. This chain is Tryptophan synthase alpha chain, found in Erwinia tasmaniensis (strain DSM 17950 / CFBP 7177 / CIP 109463 / NCPPB 4357 / Et1/99).